The chain runs to 87 residues: Phosphoribosyl-ATP pyrophosphatase (87 aa).

It belongs to the PRA-PH family.

The protein localises to the cytoplasm. The catalysed reaction is 1-(5-phospho-beta-D-ribosyl)-ATP + H2O = 1-(5-phospho-beta-D-ribosyl)-5'-AMP + diphosphate + H(+). It functions in the pathway amino-acid biosynthesis; L-histidine biosynthesis; L-histidine from 5-phospho-alpha-D-ribose 1-diphosphate: step 2/9. The sequence is that of Phosphoribosyl-ATP pyrophosphatase from Bifidobacterium adolescentis (strain ATCC 15703 / DSM 20083 / NCTC 11814 / E194a).